The following is a 417-amino-acid chain: Biofilm dispersion protein BdlA (417 aa).

The PAS 1 domain maps to 1-66; that stretch reads MAALDRSMAR…RRFWERLRRG (66 aa). The 48-residue stretch at 67–114 folds into the PAC 1 domain; the sequence is EHFSGRCKRITREGRPLWLEATYNPVRDGQGRLLKVVKYASDIDAIVH. One can recognise a PAS 2 domain in the interval 115–188; the sequence is QEHEMQSKLD…ADLWRRLNRG (74 aa). Positions 191 to 241 constitute a PAC 2 domain; sequence VTGQFRRVHRNGQPVWLEASYNPVYDADGKLYKVVKFASDVSDRMRRYQAE. The Methyl-accepting transducer domain maps to 242-417; it reads ADNAHQAHTL…QFSRTLNADL (176 aa).

Its function is as follows. Essential for biofilm dispersion by sensing environmental cues. May be involved in sensing and transducing signals within cells, resulting in the modulation of c-di-GMP levels, swimming motility and adhesiveness of the bacterial cell surface. This is Biofilm dispersion protein BdlA (bdlA) from Pseudomonas aeruginosa (strain ATCC 15692 / DSM 22644 / CIP 104116 / JCM 14847 / LMG 12228 / 1C / PRS 101 / PAO1).